The primary structure comprises 138 residues: MSQAEQNFMITYARRKSARASCYIKPGNGKVFVNDIPIEIIPIEVVRYKIMEPLVLAGDKITSSIEARIYTQGGGIMGQADAARMALARALVKFTNSKELVEIYKSYDRTMLAGDPRQTESEKWMRYSARRWRQKAYR.

The protein belongs to the universal ribosomal protein uS9 family.

The protein is Small ribosomal subunit protein uS9 (rps9) of Sulfolobus acidocaldarius (strain ATCC 33909 / DSM 639 / JCM 8929 / NBRC 15157 / NCIMB 11770).